A 435-amino-acid chain; its full sequence is ATP-dependent protease ATPase subunit HslU (435 aa).

ATP-binding positions include isoleucine 18, glycine 60–glutamate 65, aspartate 248, glutamate 313, and arginine 385.

Belongs to the ClpX chaperone family. HslU subfamily. A double ring-shaped homohexamer of HslV is capped on each side by a ring-shaped HslU homohexamer. The assembly of the HslU/HslV complex is dependent on binding of ATP.

Its subcellular location is the cytoplasm. Functionally, ATPase subunit of a proteasome-like degradation complex; this subunit has chaperone activity. The binding of ATP and its subsequent hydrolysis by HslU are essential for unfolding of protein substrates subsequently hydrolyzed by HslV. HslU recognizes the N-terminal part of its protein substrates and unfolds these before they are guided to HslV for hydrolysis. This is ATP-dependent protease ATPase subunit HslU from Rhizobium etli (strain CIAT 652).